A 185-amino-acid chain; its full sequence is Ribosome-recycling factor (185 aa).

It belongs to the RRF family.

The protein resides in the cytoplasm. Its function is as follows. Responsible for the release of ribosomes from messenger RNA at the termination of protein biosynthesis. May increase the efficiency of translation by recycling ribosomes from one round of translation to another. This chain is Ribosome-recycling factor, found in Pseudomonas putida (strain W619).